The sequence spans 70 residues: Exodeoxyribonuclease 7 small subunit (70 aa).

Belongs to the XseB family. In terms of assembly, heterooligomer composed of large and small subunits.

It is found in the cytoplasm. It catalyses the reaction Exonucleolytic cleavage in either 5'- to 3'- or 3'- to 5'-direction to yield nucleoside 5'-phosphates.. In terms of biological role, bidirectionally degrades single-stranded DNA into large acid-insoluble oligonucleotides, which are then degraded further into small acid-soluble oligonucleotides. The polypeptide is Exodeoxyribonuclease 7 small subunit (Streptococcus gordonii (strain Challis / ATCC 35105 / BCRC 15272 / CH1 / DL1 / V288)).